Consider the following 1504-residue polypeptide: DNA-directed RNA polymerase subunit beta' (1504 aa).

Positions 60, 62, 75, and 78 each coordinate Zn(2+). A disordered region spans residues 265–294; that stretch reads RKQRDLEDAEQLTGAERERKEYEASQERER. Basic and acidic residues predominate over residues 279-294; sequence AERERKEYEASQERER. Mg(2+) contacts are provided by Asp-626, Asp-628, and Asp-630. Cys-1002, Cys-1075, Cys-1082, and Cys-1085 together coordinate Zn(2+). Positions 1468–1504 are disordered; it reads RALIGGDGDDGERNNGDFDDQVGEDVVIPPDDDDQEA.

It belongs to the RNA polymerase beta' chain family. As to quaternary structure, the RNAP catalytic core consists of 2 alpha, 1 beta, 1 beta' and 1 omega subunit. When a sigma factor is associated with the core the holoenzyme is formed, which can initiate transcription. The cofactor is Mg(2+). Zn(2+) serves as cofactor.

The catalysed reaction is RNA(n) + a ribonucleoside 5'-triphosphate = RNA(n+1) + diphosphate. Functionally, DNA-dependent RNA polymerase catalyzes the transcription of DNA into RNA using the four ribonucleoside triphosphates as substrates. This is DNA-directed RNA polymerase subunit beta' from Roseiflexus sp. (strain RS-1).